Here is a 2365-residue protein sequence, read N- to C-terminus: TRIO and F-actin-binding protein (2365 aa).

4 disordered regions span residues 48-1106 (VPYC…HEPL), 1168-1554 (HRDA…SERR), 1593-1667 (LPRK…WPKI), and 1679-1751 (AGLE…TSWR). The span at 132-151 (SDPTSSPDSATPDDTSNSSS) shows a compositional bias: low complexity. A Phosphothreonine modification is found at histidine 221. Composition is skewed to polar residues over residues 239-271 (TLTQASSMTPHSGPRSTTSQASPAQRDTAQAAS), 291-375 (RASS…TPQR), 403-422 (RTSCAQRDNPKASRTSSPNR), 429-471 (RTSC…SPNR), 478-520 (RTSC…SPNR), 527-569 (RTSC…SPNR), 576-618 (RTSC…SPNR), 625-650 (RTSCAQRDNPRASSPNRTTQQDSPRT), 661-674 (SSPNRTIQQENPRT), 683-701 (RASSPSRTIQQENPRTSCA), 709-722 (SSPNRTTQQENPRT), 745-785 (RTSC…SPNR), and 807-837 (IRATQQDNPRTCIQQNIPRSSSTQQDNPKTS). The tract at residues 324 to 348 (STQEDTPRASSTQWNTPRASSPSRS) is essentiel for its aggregation. Phosphothreonine is present on glutamine 457. Positions 839 to 854 (TKRDNLRPTCTQRDRT) are enriched in basic and acidic residues. Polar residues-rich tracts occupy residues 855–898 (QSFS…SSPH), 913–927 (PTQSDGPRTSSPSRS), and 945–994 (DRPQ…TSSP). The segment covering 1045–1056 (RAPESEPPHHEP) has biased composition (basic and acidic residues). A compositionally biased stretch (polar residues) spans 1195 to 1206 (SMESLAPSTDSL). Basic and acidic residues-rich tracts occupy residues 1260–1270 (ETRHNLEREEY) and 1303–1319 (GRAEVERLFGQERRKSE). Positions 1332 to 1349 (SQQPSQGQSQLLRRQSSP) are enriched in low complexity. Basic and acidic residues-rich tracts occupy residues 1378–1387 (SPEKRPEGDR) and 1402–1411 (TPERELRTQR). A compositionally biased stretch (gly residues) spans 1452–1461 (GGLGPGGWWG). Residues 1494–1508 (WEEKPTHELPRELGK) show a composition bias toward basic and acidic residues. Residues 1524 to 1534 (ESSQSWHSGTP) show a composition bias toward polar residues. Positions 1594 to 1606 (PRKDPAGHRDDLA) are enriched in basic and acidic residues. Over residues 1645–1664 (ALQSQSPVQLPSPACTSTQW) the composition is skewed to polar residues. Residues 1696–1705 (PSLPELQFQP) are compositionally biased toward low complexity. A compositionally biased stretch (basic and acidic residues) spans 1724-1735 (KQADSADKRPAE). Residues 1778–1887 (LNFKKGWMSI…WIEALRKTVR (110 aa)) enclose the PH domain. Serine 1796 bears the Phosphoserine mark. Disordered regions lie at residues 1889 to 2017 (TSAP…LTED) and 2174 to 2194 (LSKTRSLQQGPDGLRKQHQSD). Residue arginine 1930 is modified to Omega-N-methylarginine. 2 positions are modified to phosphoserine: serine 1949 and serine 1955. Residues 1965 to 1997 (TPDRLAKQEELERDLAQRSEERRKWFEATDSRT) show a composition bias toward basic and acidic residues. Coiled coils occupy residues 2062 to 2247 (SDGH…NQEL) and 2281 to 2361 (ELEV…SMRN).

In terms of assembly, isoform 1 forms aggregates. Isoform 1 binds to TRIO and F-actin. Isoform 1 may also interact with myosin II. Interacts with HECTD3. Interacts with PJVK. Interacts with TERF1; mediates TERF1 localization to the centrosome. Post-translationally, ubiquitinated by HECTD3, leading to its degradation by the proteasome. Phosphorylation at Thr-457 by PLK1 ensures mitotic progression and is essential for accurate chromosome segregation. Phosphorylation at residues Thr-221 and Thr-457 by kinase NEK2A and PLK1 coordinates TERF1 translocation from telomere to spindle pole. Widely expressed. Highly expressed in heart and placenta. In terms of tissue distribution, expressed in fetal brain, retina and cochlea but is not detectable in the other tissues.

It is found in the nucleus. It localises to the cytoplasm. The protein resides in the cytoskeleton. The protein localises to the microtubule organizing center. Its subcellular location is the centrosome. It is found in the midbody. It localises to the chromosome. The protein resides in the telomere. In terms of biological role, regulates actin cytoskeletal organization, cell spreading and cell contraction by directly binding and stabilizing filamentous F-actin and prevents its depolymerization. May also serve as a linker protein to recruit proteins required for F-actin formation and turnover. Essential for correct mitotic progression. Functionally, plays a pivotal role in the formation of stereocilia rootlets. The sequence is that of TRIO and F-actin-binding protein (TRIOBP) from Homo sapiens (Human).